Reading from the N-terminus, the 285-residue chain is HTH-type transcriptional regulator MurR (285 aa).

An HTH rpiR-type domain is found at 1–77 (MLYLTKIRNA…MALIGEYSAS (77 aa)). Residues 37 to 56 (SRKMAKLLGISQSSIVKFAQ) constitute a DNA-binding region (H-T-H motif). In terms of domain architecture, SIS spans 128 to 268 (IIEAISKAPF…FVGLVQLNDV (141 aa)).

In terms of assembly, homotetramer.

It participates in amino-sugar metabolism; N-acetylmuramate degradation [regulation]. Functionally, represses the expression of the murPQ operon involved in the uptake and degradation of N-acetylmuramic acid (MurNAc). Binds to two adjacent inverted repeats within the operator region. MurNAc 6-phosphate, the substrate of MurQ, is the specific inducer that weakens binding of MurR to the operator. The protein is HTH-type transcriptional regulator MurR of Escherichia coli O17:K52:H18 (strain UMN026 / ExPEC).